We begin with the raw amino-acid sequence, 250 residues long: MIINIGLSGATGKMGRTILERIDNFKNCKISAKFNSTRDLHELNDLCKNSDVVIDFSTPEILEKLVDSALKYDTKLVIGTTGFTSSQFKLLEKAAKTLPILYSANMSIGANLLGYLAKEATKILDDYDIEILEAHHRAKKDAPSGTAIMLAEMVTAEKELDITFNRGNKTRRTNEIGISSLRGGNVHGTHEIFFLGDDETITLKHEALNKNSFADGAIRAAIWLQDKQTGLYSMLDFYKNLINYHLKKPI.

Residues 9–14, 79–81, and 103–106 each bind NAD(+); these read GATGKM, GTT, and SANM. Catalysis depends on His135, which acts as the Proton donor/acceptor. Residue His136 participates in (S)-2,3,4,5-tetrahydrodipicolinate binding. Residue Lys139 is the Proton donor of the active site. Residue 145–146 coordinates (S)-2,3,4,5-tetrahydrodipicolinate; that stretch reads GT.

It belongs to the DapB family.

The protein resides in the cytoplasm. It carries out the reaction (S)-2,3,4,5-tetrahydrodipicolinate + NAD(+) + H2O = (2S,4S)-4-hydroxy-2,3,4,5-tetrahydrodipicolinate + NADH + H(+). The catalysed reaction is (S)-2,3,4,5-tetrahydrodipicolinate + NADP(+) + H2O = (2S,4S)-4-hydroxy-2,3,4,5-tetrahydrodipicolinate + NADPH + H(+). It participates in amino-acid biosynthesis; L-lysine biosynthesis via DAP pathway; (S)-tetrahydrodipicolinate from L-aspartate: step 4/4. In terms of biological role, catalyzes the conversion of 4-hydroxy-tetrahydrodipicolinate (HTPA) to tetrahydrodipicolinate. This Rickettsia bellii (strain OSU 85-389) protein is 4-hydroxy-tetrahydrodipicolinate reductase.